The following is a 301-amino-acid chain: Probable alpha-L-glutamate ligase (301 aa).

The ATP-grasp domain maps to L104–E287. Residues K141, E178 to Y179, D187, and R211 to N213 each bind ATP. Mg(2+) is bound by residues D248, E260, and N262. Mn(2+) contacts are provided by D248, E260, and N262.

Belongs to the RimK family. Mg(2+) is required as a cofactor. Requires Mn(2+) as cofactor.

This is Probable alpha-L-glutamate ligase from Marinomonas sp. (strain MWYL1).